The following is an 86-amino-acid chain: Actinorhodin polyketide synthase acyl carrier protein (86 aa).

The Carrier domain occupies 4-82; sequence LLTTDDLRRA…ELLDLINGAL (79 aa). At S42 the chain carries O-(pantetheine 4'-phosphoryl)serine.

In terms of processing, 4'-phosphopantetheine is transferred from CoA to a specific serine of the apo-ACP-like protein.

It functions in the pathway antibiotic biosynthesis; actinorhodin biosynthesis. Its function is as follows. Acyl carrier protein. The protein is Actinorhodin polyketide synthase acyl carrier protein of Streptomyces coelicolor (strain ATCC BAA-471 / A3(2) / M145).